Here is a 456-residue protein sequence, read N- to C-terminus: Dothistromin biosynthesis regulatory protein aflJ (456 aa).

In terms of domain architecture, HTH iclR-type spans 74-143 (LARENQLLAC…PKPGYVAHSG (70 aa)). Residues 104–123 (YSDVADLACVPVDQLRRIAR) constitute a DNA-binding region (H-T-H motif). Positions 290–300 (KLHNGLSTPPE) are enriched in polar residues. Positions 290-314 (KLHNGLSTPPESDTGPAARAAKASE) are disordered.

The protein localises to the nucleus. Transcription coactivator involved in regulation of the dothistromin biosynthesis gene cluster with aflR. This chain is Dothistromin biosynthesis regulatory protein aflJ, found in Dothistroma septosporum (strain NZE10 / CBS 128990) (Red band needle blight fungus).